Here is a 309-residue protein sequence, read N- to C-terminus: Taste receptor type 2 member 8 (309 aa).

The Extracellular portion of the chain corresponds to 1–7; that stretch reads MFSPADN. Residues 8–28 traverse the membrane as a helical segment; the sequence is IFIILITGEFILGILGNGYIA. At 29 to 50 the chain is on the cytoplasmic side; the sequence is LVNWIDWIKKKKISTVDYILTN. Residues 51–71 form a helical membrane-spanning segment; the sequence is LVIARICLISVMVVNGIVIVL. The Extracellular portion of the chain corresponds to 72-82; it reads NPDVYTKNKQQ. Residues 83 to 103 form a helical membrane-spanning segment; that stretch reads IVIFTFWTFANYLNMWITTCL. Topologically, residues 104-131 are cytoplasmic; sequence NVFYFLKIASSSHPLFLWLKWKIDMVVH. A helical membrane pass occupies residues 132 to 152; that stretch reads WILLGCFAISLLVSLIAAIVL. The Extracellular segment spans residues 153–184; it reads SCDYRFHAIAKHKRNITEMFHVSKIPYFEPLT. A glycan (N-linked (GlcNAc...) asparagine) is linked at N167. The helical transmembrane segment at 185-205 threads the bilayer; the sequence is LFNLFAIVPFIVSLISFFLLV. Residues 206 to 239 are Cytoplasmic-facing; that stretch reads RSLWRHTKQIKLYATGSRDPSTEVHVRAIKTMTS. Residues 240–260 traverse the membrane as a helical segment; it reads FIFFFFLYYISSILMTFSYLM. Topologically, residues 261–266 are extracellular; it reads TKYKLA. The helical transmembrane segment at 267-287 threads the bilayer; that stretch reads VEFGEIAAILYPLGHSLILIV. Residues 288-309 are Cytoplasmic-facing; that stretch reads LNNKLRQTFVRMLTCRKIACMI.

The protein belongs to the G-protein coupled receptor T2R family. Expressed in subsets of taste receptor cells of the tongue and palate epithelium and exclusively in gustducin-positive cells.

It is found in the membrane. Its function is as follows. Receptor that may play a role in the perception of bitterness and is gustducin-linked. May play a role in sensing the chemical composition of the gastrointestinal content. The activity of this receptor may stimulate alpha gustducin, mediate PLC-beta-2 activation and lead to the gating of TRPM5. The polypeptide is Taste receptor type 2 member 8 (TAS2R8) (Homo sapiens (Human)).